The sequence spans 20 residues: Thylakoid lumenal 22 kDa protein (20 aa).

The protein localises to the plastid. It localises to the chloroplast thylakoid lumen. This chain is Thylakoid lumenal 22 kDa protein, found in Spinacia oleracea (Spinach).